A 24-amino-acid polypeptide reads, in one-letter code: Cupiennin-5a (24 aa).

As to expression, expressed by the venom gland.

It is found in the secreted. This chain is Cupiennin-5a, found in Cupiennius salei (American wandering spider).